The sequence spans 225 residues: MYSIRVLAIECIRLAPEYLPFEEGWRMQQELHKKITESQTNKNRQASMIFCEHEPVYTAGARTRSWEMPQNEKVIRVGRGGKITWHGPGQLVGYPILSLGATPDVLRYVRQIEEGLINALQSVGINGFRIAGRSGVWVRNGVSDEKVAAIGVRVQKNVTLHGFALNCSNDLAPFEKIVPCGISDAGVTTISRILKRTITPKEILDSVFNSICSALEYINTCRGNV.

Residues 42–219 (KNRQASMIFC…SICSALEYIN (178 aa)) form the BPL/LPL catalytic domain. Residues 79–86 (RGGKITWH), 149–151 (AIG), and 162–164 (GFA) contribute to the substrate site. The active-site Acyl-thioester intermediate is the cysteine 180.

The protein belongs to the LipB family.

Its subcellular location is the cytoplasm. The catalysed reaction is octanoyl-[ACP] + L-lysyl-[protein] = N(6)-octanoyl-L-lysyl-[protein] + holo-[ACP] + H(+). The protein operates within protein modification; protein lipoylation via endogenous pathway; protein N(6)-(lipoyl)lysine from octanoyl-[acyl-carrier-protein]: step 1/2. Functionally, catalyzes the transfer of endogenously produced octanoic acid from octanoyl-acyl-carrier-protein onto the lipoyl domains of lipoate-dependent enzymes. Lipoyl-ACP can also act as a substrate although octanoyl-ACP is likely to be the physiological substrate. The polypeptide is Octanoyltransferase (Tropheryma whipplei (strain TW08/27) (Whipple's bacillus)).